We begin with the raw amino-acid sequence, 124 residues long: Membrane-anchored ubiquitin-fold protein 2 (124 aa).

Positions 8-74 (LEIKFRLNDG…LENNKTVGDC (67 aa)) constitute a Ubiquitin-like domain. Residues C115, C117, C119, and C124 are each lipidated (S-palmitoyl cysteine).

Acylated protein. Probably modified with palmitate. In terms of tissue distribution, ubiquitous, but three fold higher expression in stamens.

It is found in the cell membrane. Functionally, may serve as docking site to facilitate the association of other proteins to the plasma membrane. This is Membrane-anchored ubiquitin-fold protein 2 (MUB2) from Arabidopsis thaliana (Mouse-ear cress).